Consider the following 310-residue polypeptide: UDP-N-acetylenolpyruvoylglucosamine reductase (310 aa).

Positions 35 to 203 (RAGGAAEALV…TRVRFALRKG (169 aa)) constitute an FAD-binding PCMH-type domain. The active site involves Arg183. Ser232 acts as the Proton donor in catalysis. Glu302 is a catalytic residue.

It belongs to the MurB family. FAD is required as a cofactor.

The protein resides in the cytoplasm. The catalysed reaction is UDP-N-acetyl-alpha-D-muramate + NADP(+) = UDP-N-acetyl-3-O-(1-carboxyvinyl)-alpha-D-glucosamine + NADPH + H(+). It functions in the pathway cell wall biogenesis; peptidoglycan biosynthesis. In terms of biological role, cell wall formation. This Myxococcus xanthus (strain DK1622) protein is UDP-N-acetylenolpyruvoylglucosamine reductase.